The primary structure comprises 630 residues: Chaperone protein HtpG (630 aa).

An a; substrate-binding region spans residues 1–339 (MKGQETRGFQ…SNDLPLNVSR (339 aa)). The b stretch occupies residues 340 to 555 (EILQDNSITR…VDEMSTQMAK (216 aa)). The interval 556–630 (LFAAAGQQVP…MNQLLLSEKA (75 aa)) is c.

The protein belongs to the heat shock protein 90 family. In terms of assembly, homodimer.

The protein localises to the cytoplasm. Functionally, molecular chaperone. Has ATPase activity. The protein is Chaperone protein HtpG of Photorhabdus laumondii subsp. laumondii (strain DSM 15139 / CIP 105565 / TT01) (Photorhabdus luminescens subsp. laumondii).